We begin with the raw amino-acid sequence, 562 residues long: BOS complex subunit NCLN (562 aa).

A signal peptide spans Met1–Ala41. Residues Ala42–Ala521 lie on the Extracellular side of the membrane. N-linked (GlcNAc...) asparagine glycosylation is present at Asn240. Residues Gly420–Pro447 form a disordered region. The helical transmembrane segment at Ile522–Val542 threads the bilayer. At Gln543–Gln562 the chain is on the cytoplasmic side.

The protein belongs to the nicastrin family. As to quaternary structure, component of the multi-pass translocon (MPT) complex.

It is found in the endoplasmic reticulum membrane. In terms of biological role, component of the multi-pass translocon (MPT) complex that mediates insertion of multi-pass membrane proteins into the lipid bilayer of membranes. The MPT complex takes over after the SEC61 complex: following membrane insertion of the first few transmembrane segments of proteins by the SEC61 complex, the MPT complex occludes the lateral gate of the SEC61 complex to promote insertion of subsequent transmembrane regions. May antagonize Nodal signaling and subsequent organization of axial structures during mesodermal patterning, via its interaction with NOMO. This is BOS complex subunit NCLN (NCLN) from Gallus gallus (Chicken).